The primary structure comprises 635 residues: Putative adagio-like protein 2 (635 aa).

Residues 1-25 (MEWDSDSEGSGDEEEEEEEEEEEGV) are compositionally biased toward acidic residues. Positions 1–32 (MEWDSDSEGSGDEEEEEEEEEEEGVEVGGGGD) are disordered. The PAS domain maps to 44-123 (ALAIEGVLGA…TDIRRCLEEG (80 aa)). Cysteine 91 carries the post-translational modification S-4a-FMN cysteine. An F-box domain is found at 209–255 (SDLFLLSDEVLCQKILSRLSPRDIASVNSVCKRLYHLTRNDDLWRMV). 4 Kelch repeats span residues 371-421 (RLVL…TLDG), 423-474 (KLVV…VYDG), 476-530 (KILM…PPPR), and 542-594 (RILI…VVGG).

It belongs to the ADAGIO family. In terms of processing, FMN binds covalently to cysteine after exposure to blue light and is reversed in the dark.

The protein resides in the nucleus. The protein operates within protein modification; protein ubiquitination. Functionally, component of an E3 ubiquitin ligase complex that plays a central role in blue light-dependent circadian cycles. Acts as a blue light photoreceptor, due to the presence of FMN, that mediates light-regulated protein degradation of critical clock components by targeting them to the proteasome complex. The polypeptide is Putative adagio-like protein 2 (Oryza sativa subsp. japonica (Rice)).